The sequence spans 424 residues: Enolase (424 aa).

Residue Q162 participates in (2R)-2-phosphoglycerate binding. E204 serves as the catalytic Proton donor. Mg(2+) contacts are provided by D241, E284, and D311. Residues K336, R365, S366, and K387 each contribute to the (2R)-2-phosphoglycerate site. The Proton acceptor role is filled by K336.

It belongs to the enolase family. The cofactor is Mg(2+).

The protein localises to the cytoplasm. It is found in the secreted. It localises to the cell surface. It carries out the reaction (2R)-2-phosphoglycerate = phosphoenolpyruvate + H2O. The protein operates within carbohydrate degradation; glycolysis; pyruvate from D-glyceraldehyde 3-phosphate: step 4/5. Catalyzes the reversible conversion of 2-phosphoglycerate (2-PG) into phosphoenolpyruvate (PEP). It is essential for the degradation of carbohydrates via glycolysis. In Rhizobium meliloti (strain 1021) (Ensifer meliloti), this protein is Enolase.